We begin with the raw amino-acid sequence, 375 residues long: Putative glutamate--cysteine ligase 2 (375 aa).

The protein belongs to the glutamate--cysteine ligase type 2 family. YbdK subfamily.

It carries out the reaction L-cysteine + L-glutamate + ATP = gamma-L-glutamyl-L-cysteine + ADP + phosphate + H(+). In terms of biological role, ATP-dependent carboxylate-amine ligase which exhibits weak glutamate--cysteine ligase activity. This is Putative glutamate--cysteine ligase 2 from Sorangium cellulosum (strain So ce56) (Polyangium cellulosum (strain So ce56)).